A 434-amino-acid polypeptide reads, in one-letter code: MPKTDIARRVYNHTWKLDPIIRSLLDTDFYKLLMLQMIWQLYPDVDATFSLINRTKTVRLAEEIDEQELRDQLDHARTLRFSKKEMIWLAGNTFYGRKQIFSPEFLSWLARFRLPEYELSRRDGQFELTFRGRWVETTMWEIPALAIINELRSRAAMKGLGPFTLDVLYARAKAKMWSKVEQLRQYPNLRISDFGTRRRHSFLWQRWCVEALKEGIGASFSGSSNVLLAMDNDLEALGTNAHELPMVAAALARNDKELAAAPYKVLQDWNQLYGGNLLIVLPDSFGTAAFLRNAPDWVADWTGFRPDSAPPVEGGEKILAWWKKKGRDPRDKLLIFSDGLDVDTIIKTYRHFEGRVRMSFGWGTNLTNDFAGCAPTEIGGLNPISIVCKVSEANGRPAVKLSDNPRKATGDPAEVERYLKFFGTEDFVEQTVRV.

His-242 is modified (phosphohistidine; by autocatalysis).

It belongs to the NAPRTase family. Post-translationally, transiently phosphorylated on a His residue during the reaction cycle. Phosphorylation strongly increases the affinity for substrates and increases the rate of nicotinate D-ribonucleotide production. Dephosphorylation regenerates the low-affinity form of the enzyme, leading to product release.

It carries out the reaction nicotinate + 5-phospho-alpha-D-ribose 1-diphosphate + ATP + H2O = nicotinate beta-D-ribonucleotide + ADP + phosphate + diphosphate. Its pathway is cofactor biosynthesis; NAD(+) biosynthesis; nicotinate D-ribonucleotide from nicotinate: step 1/1. Catalyzes the synthesis of beta-nicotinate D-ribonucleotide from nicotinate and 5-phospho-D-ribose 1-phosphate at the expense of ATP. The sequence is that of Nicotinate phosphoribosyltransferase from Sinorhizobium fredii (strain NBRC 101917 / NGR234).